We begin with the raw amino-acid sequence, 957 residues long: Glycine dehydrogenase (decarboxylating) (957 aa).

An N6-(pyridoxal phosphate)lysine modification is found at lysine 708.

The protein belongs to the GcvP family. In terms of assembly, the glycine cleavage system is composed of four proteins: P, T, L and H. Pyridoxal 5'-phosphate serves as cofactor.

It carries out the reaction N(6)-[(R)-lipoyl]-L-lysyl-[glycine-cleavage complex H protein] + glycine + H(+) = N(6)-[(R)-S(8)-aminomethyldihydrolipoyl]-L-lysyl-[glycine-cleavage complex H protein] + CO2. Functionally, the glycine cleavage system catalyzes the degradation of glycine. The P protein binds the alpha-amino group of glycine through its pyridoxal phosphate cofactor; CO(2) is released and the remaining methylamine moiety is then transferred to the lipoamide cofactor of the H protein. This Shigella dysenteriae serotype 1 (strain Sd197) protein is Glycine dehydrogenase (decarboxylating).